The sequence spans 176 residues: MSKKNPNLEDELSLFQDAVKGVKKFTHDTIITRRQQNSKVDKAKVSSKETQNHEFYFSDEFEPHLNEHGPTQYARTGVSKYEVKKLRRGIYVPDMYLDMHGMTQQEAKRELAAMLAACIKESVSCACVMHGIGKHILKKKAPLWLAQHPDVMAFHQAPLEFGGNGALLVLIDIPER.

The region spanning 97–172 (LDMHGMTQQE…GNGALLVLID (76 aa)) is the Smr domain.

Belongs to the SmrB family. As to quaternary structure, associates with collided ribosomes, but not with correctly translating polysomes.

In terms of biological role, acts as a ribosome collision sensor. Detects stalled/collided disomes (pairs of ribosomes where the leading ribosome is stalled and a second ribosome has collided with it) and endonucleolytically cleaves mRNA at the 5' boundary of the stalled ribosome. Stalled/collided disomes form a new interface (primarily via the 30S subunits) that binds SmrB. Cleaved mRNA becomes available for tmRNA ligation, leading to ribosomal subunit dissociation and rescue of stalled ribosomes. The chain is Ribosome rescue factor SmrB from Photobacterium profundum (strain SS9).